Here is a 394-residue protein sequence, read N- to C-terminus: Phosphopentomutase (394 aa).

Asp-13, Asp-286, His-291, Asp-327, His-328, and His-339 together coordinate Mn(2+).

It belongs to the phosphopentomutase family. Requires Mn(2+) as cofactor.

It is found in the cytoplasm. It carries out the reaction 2-deoxy-alpha-D-ribose 1-phosphate = 2-deoxy-D-ribose 5-phosphate. It catalyses the reaction alpha-D-ribose 1-phosphate = D-ribose 5-phosphate. Its pathway is carbohydrate degradation; 2-deoxy-D-ribose 1-phosphate degradation; D-glyceraldehyde 3-phosphate and acetaldehyde from 2-deoxy-alpha-D-ribose 1-phosphate: step 1/2. Isomerase that catalyzes the conversion of deoxy-ribose 1-phosphate (dRib-1-P) and ribose 1-phosphate (Rib-1-P) to deoxy-ribose 5-phosphate (dRib-5-P) and ribose 5-phosphate (Rib-5-P), respectively. The protein is Phosphopentomutase of Bacillus cereus (strain ATCC 10987 / NRS 248).